The primary structure comprises 722 residues: Polyribonucleotide nucleotidyltransferase (722 aa).

The Mg(2+) site is built by Asp-495 and Asp-501. A KH domain is found at 562 to 621; it reads PRLLSFRIDPELIGTVIGPGGRTIKGITERTNTKIDIEDGGIVTIASHDGAAAEEAQRII. Residues 631-699 form the S1 motif domain; it reads GEIFPGSITR…NRGRINLTLR (69 aa). A disordered region spans residues 700 to 722; it reads GVSQNGGMSNYPEPTPTPVAPLT. Residues 712–722 are compositionally biased toward pro residues; it reads EPTPTPVAPLT.

Belongs to the polyribonucleotide nucleotidyltransferase family. Mg(2+) serves as cofactor.

The protein localises to the cytoplasm. It catalyses the reaction RNA(n+1) + phosphate = RNA(n) + a ribonucleoside 5'-diphosphate. Its function is as follows. Involved in mRNA degradation. Catalyzes the phosphorolysis of single-stranded polyribonucleotides processively in the 3'- to 5'-direction. This Prochlorococcus marinus (strain NATL1A) protein is Polyribonucleotide nucleotidyltransferase.